Reading from the N-terminus, the 390-residue chain is MPPRSLPNLSLPTEASESELEPEVWENDFLPDSDGTTAELVIRCVIPSLYLIIISVGLLGNIMLVKIFLTNSTMRSVPNIFISNLAAGDLLLLLTCVPVDASRYFFDEWVFGKLGCKLIPAIQLTSVGVSVFTLTALSADRYRAIVNPMDMQTSGVVLWTSLKAVGIWVVSVLLAVPEAVFSEVARIGSSDNSSFTACIPYPQTDELHPKIHSVLIFLVYFLIPLVIISIYYYHIAKTLIRSAHNLPGEYNEHTKKQMETRKRLAKIVLVFVGCFVFCWFPNHILYLYRSFNYKEIDPSLGHMIVTLVARVLSFSNSCVNPFALYLLSESFRKHFNSQLCCGQKSYPERSTSYLLSSSAVRMTSLKSNAKNVVTNSVLLNGHSTKQEIAL.

Residues 1 to 20 (MPPRSLPNLSLPTEASESEL) are disordered. The Extracellular portion of the chain corresponds to 1–41 (MPPRSLPNLSLPTEASESELEPEVWENDFLPDSDGTTAELV). Asn8 carries N-linked (GlcNAc...) asparagine glycosylation. A helical membrane pass occupies residues 42–65 (IRCVIPSLYLIIISVGLLGNIMLV). Residues 66–79 (KIFLTNSTMRSVPN) are Cytoplasmic-facing. Residues 80–99 (IFISNLAAGDLLLLLTCVPV) form a helical membrane-spanning segment. The Extracellular segment spans residues 100–117 (DASRYFFDEWVFGKLGCK). Cys116 and Cys198 form a disulfide bridge. A helical transmembrane segment spans residues 118–139 (LIPAIQLTSVGVSVFTLTALSA). Residues 140 to 156 (DRYRAIVNPMDMQTSGV) lie on the Cytoplasmic side of the membrane. The helical transmembrane segment at 157–177 (VLWTSLKAVGIWVVSVLLAVP) threads the bilayer. The Extracellular segment spans residues 178–211 (EAVFSEVARIGSSDNSSFTACIPYPQTDELHPKI). The N-linked (GlcNAc...) asparagine glycan is linked to Asn192. The chain crosses the membrane as a helical span at residues 212 to 235 (HSVLIFLVYFLIPLVIISIYYYHI). Over 236 to 266 (AKTLIRSAHNLPGEYNEHTKKQMETRKRLAK) the chain is Cytoplasmic. Residues 267 to 287 (IVLVFVGCFVFCWFPNHILYL) form a helical membrane-spanning segment. Topologically, residues 288 to 299 (YRSFNYKEIDPS) are extracellular. Residues 300–327 (LGHMIVTLVARVLSFSNSCVNPFALYLL) form a helical membrane-spanning segment. Over 328–390 (SESFRKHFNS…GHSTKQEIAL (63 aa)) the chain is Cytoplasmic. The S-palmitoyl cysteine moiety is linked to residue Cys341. Ser352 is subject to Phosphoserine.

This sequence belongs to the G-protein coupled receptor 1 family. In terms of tissue distribution, brain (olfactory bulb and central thalamic regions), and esophagus.

It localises to the cell membrane. Receptor for neuromedin-B. Contributes to the maintenance of basal sigh rate through signaling in the pre-Botzinger complex, a cluster of several thousand neurons in the ventrolateral medulla responsible for inspiration during respiratory activity. Contributes to the induction of sneezing following exposure to chemical irritants or allergens which causes release of NMB by nasal sensory neurons and activation of NMBR-expressing neurons in the sneeze-evoking region of the brainstem. These in turn activate neurons of the caudal ventral respiratory group, giving rise to the sneezing response. Contributes to induction of acute itch, possibly through its activation on dorsal root ganglion neurons by the NMB peptide. Plays a role in the innate immune response to influenza A virus infection by enhancing interferon alpha expression and reducing expression of IL6. Plays a role in CSF1-induced proliferation of osteoclast precursors by contributing to the positive regulation of the expression of the CSF1 receptor CSF1R. This chain is Neuromedin-B receptor (Nmbr), found in Rattus norvegicus (Rat).